Reading from the N-terminus, the 403-residue chain is Probable tRNA sulfurtransferase (403 aa).

Residues 60–165 form the THUMP domain; it reads QLAEERLKPI…KEGVFLSCRT (106 aa). ATP-binding positions include 183–184, 208–209, R265, G287, and Q296; these read ML and HF.

This sequence belongs to the ThiI family.

The protein resides in the cytoplasm. The catalysed reaction is [ThiI sulfur-carrier protein]-S-sulfanyl-L-cysteine + a uridine in tRNA + 2 reduced [2Fe-2S]-[ferredoxin] + ATP + H(+) = [ThiI sulfur-carrier protein]-L-cysteine + a 4-thiouridine in tRNA + 2 oxidized [2Fe-2S]-[ferredoxin] + AMP + diphosphate. It catalyses the reaction [ThiS sulfur-carrier protein]-C-terminal Gly-Gly-AMP + S-sulfanyl-L-cysteinyl-[cysteine desulfurase] + AH2 = [ThiS sulfur-carrier protein]-C-terminal-Gly-aminoethanethioate + L-cysteinyl-[cysteine desulfurase] + A + AMP + 2 H(+). It participates in cofactor biosynthesis; thiamine diphosphate biosynthesis. Catalyzes the ATP-dependent transfer of a sulfur to tRNA to produce 4-thiouridine in position 8 of tRNAs, which functions as a near-UV photosensor. Also catalyzes the transfer of sulfur to the sulfur carrier protein ThiS, forming ThiS-thiocarboxylate. This is a step in the synthesis of thiazole, in the thiamine biosynthesis pathway. The sulfur is donated as persulfide by IscS. The protein is Probable tRNA sulfurtransferase of Listeria innocua serovar 6a (strain ATCC BAA-680 / CLIP 11262).